A 435-amino-acid chain; its full sequence is Ribulose bisphosphate carboxylase large chain (435 aa).

2 residues coordinate substrate: Asn-104 and Thr-154. Lys-156 acts as the Proton acceptor in catalysis. A substrate-binding site is contributed by Lys-158. 3 residues coordinate Mg(2+): Lys-182, Asp-184, and Glu-185. Lys-182 carries the N6-carboxylysine modification. His-275 (proton acceptor) is an active-site residue. Substrate is bound by residues Arg-276, His-308, and Ser-360.

It belongs to the RuBisCO large chain family. Type I subfamily. In terms of assembly, heterohexadecamer of 8 large chains and 8 small chains. Requires Mg(2+) as cofactor.

Its subcellular location is the plastid. It is found in the chloroplast. The catalysed reaction is 2 (2R)-3-phosphoglycerate + 2 H(+) = D-ribulose 1,5-bisphosphate + CO2 + H2O. It carries out the reaction D-ribulose 1,5-bisphosphate + O2 = 2-phosphoglycolate + (2R)-3-phosphoglycerate + 2 H(+). Its function is as follows. RuBisCO catalyzes two reactions: the carboxylation of D-ribulose 1,5-bisphosphate, the primary event in carbon dioxide fixation, as well as the oxidative fragmentation of the pentose substrate in the photorespiration process. Both reactions occur simultaneously and in competition at the same active site. In Euglena pisciformis, this protein is Ribulose bisphosphate carboxylase large chain.